The chain runs to 179 residues: Large ribosomal subunit protein uL6 (179 aa).

The protein belongs to the universal ribosomal protein uL6 family. In terms of assembly, part of the 50S ribosomal subunit.

Functionally, this protein binds to the 23S rRNA, and is important in its secondary structure. It is located near the subunit interface in the base of the L7/L12 stalk, and near the tRNA binding site of the peptidyltransferase center. The polypeptide is Large ribosomal subunit protein uL6 (Syntrophotalea carbinolica (strain DSM 2380 / NBRC 103641 / GraBd1) (Pelobacter carbinolicus)).